The following is a 99-amino-acid chain: Small ribosomal subunit protein uS17 (99 aa).

This sequence belongs to the universal ribosomal protein uS17 family. In terms of assembly, part of the 30S ribosomal subunit.

Functionally, one of the primary rRNA binding proteins, it binds specifically to the 5'-end of 16S ribosomal RNA. This Thermosipho africanus (strain TCF52B) protein is Small ribosomal subunit protein uS17.